A 229-amino-acid chain; its full sequence is uncharacterized protein (229 aa).

The S4 RNA-binding domain occupies 2-69 (QRLAKIISNA…KPRLWIYYKP (68 aa)). Asp-102 serves as the catalytic Nucleophile.

It belongs to the pseudouridine synthase RsuA family.

The catalysed reaction is a uridine in RNA = a pseudouridine in RNA. This is an uncharacterized protein from Rickettsia felis (strain ATCC VR-1525 / URRWXCal2) (Rickettsia azadi).